A 107-amino-acid polypeptide reads, in one-letter code: Nucleoid-associated protein BAbS19_I00290 (107 aa).

This sequence belongs to the YbaB/EbfC family. As to quaternary structure, homodimer.

It is found in the cytoplasm. The protein localises to the nucleoid. Functionally, binds to DNA and alters its conformation. May be involved in regulation of gene expression, nucleoid organization and DNA protection. This Brucella abortus (strain S19) protein is Nucleoid-associated protein BAbS19_I00290.